The chain runs to 349 residues: MSQMENSTKKVESVANVEVVTTENAKVEQKPTSPADAIQLKVNANSTIKNLKTLVSIVKLTESGAHIGLNPKKWNPKMASYIHAKRSNNHVIDILKTILFLDRAYKFLQEVSQNGGTVMFVGTRGRVVKELIKAEAERTNSFYVTQRWLGGTLTNFTNISRSLKKFNSNLALLESEEINKYSKKEQIAINKETAKLEKFYGGIKNMKQRPDVLILVDPVNDVNAIKEARKLNIPVIALANTNADPQLIDYIIPVNNYSVKSITLILGVLADSIAELHGEPTKIVGRPDSEIVLPETKSNWKQNNYDPSKRGYNPKYVNHKSTFNKFNNKKPVDSTTNEIKTNVIKAETK.

The tract at residues 302 to 334 (QNNYDPSKRGYNPKYVNHKSTFNKFNNKKPVDS) is disordered.

This sequence belongs to the universal ribosomal protein uS2 family.

This chain is Small ribosomal subunit protein uS2, found in Ureaplasma parvum serovar 3 (strain ATCC 27815 / 27 / NCTC 11736).